Consider the following 278-residue polypeptide: MRVIATIGEFRAARAAMHGAVGLVPTMGYLHEGHLSLVRRARAENDHVIVTIFVNPTQFGPSEDLSRYPRDLPRDLALLEAEKIDVVFAPNVAEMYPPGFGTFVDVGPIAAPLEGAARPGHFRGVATVVCKLFNITTPHRAYFGQKDAQQTLVIRRMTLDLNLPVEIIVCPIVREPDGLAMSSRNVYLNPKERRAATVLFRALQAVQERFRAGERNGDALRAAMRAVIDAEPLAHPDYVSIADLDDLHELDRVTSRALASLAVRIGTTRLIDNCILEA.

An ATP-binding site is contributed by methionine 27–histidine 34. Histidine 34 (proton donor) is an active-site residue. Glutamine 58 is a (R)-pantoate binding site. A beta-alanine-binding site is contributed by glutamine 58. Residue glycine 144–aspartate 147 coordinates ATP. A (R)-pantoate-binding site is contributed by glutamine 150. ATP contacts are provided by residues valine 173 and methionine 181–arginine 184.

The protein belongs to the pantothenate synthetase family. Homodimer.

The protein localises to the cytoplasm. The enzyme catalyses (R)-pantoate + beta-alanine + ATP = (R)-pantothenate + AMP + diphosphate + H(+). It functions in the pathway cofactor biosynthesis; (R)-pantothenate biosynthesis; (R)-pantothenate from (R)-pantoate and beta-alanine: step 1/1. In terms of biological role, catalyzes the condensation of pantoate with beta-alanine in an ATP-dependent reaction via a pantoyl-adenylate intermediate. This is Pantothenate synthetase from Roseiflexus castenholzii (strain DSM 13941 / HLO8).